The primary structure comprises 256 residues: uncharacterized protein (256 aa).

Disordered stretches follow at residues 1-171 (MARG…QLKH) and 185-256 (NGQR…LYND). Residues 14–39 (KRRSKVQEEEEHVEGSEEEVEEPEQK) are a coiled coil. Acidic residues-rich tracts occupy residues 21 to 35 (EEEEHVEGSEEEVEE) and 64 to 92 (SDDDDEDDLSELDVVVEDDNPVETSDNDE). A compositionally biased stretch (basic and acidic residues) spans 108–129 (NRGDHESHDDNSDNEEQGDRGN). Positions 192 to 205 (KRGGPPRGSFGQRG) are enriched in gly residues. Residues 219-234 (RQGDTRDTRDTRDTRL) show a composition bias toward basic and acidic residues.

This is an uncharacterized protein from Acanthamoeba polyphaga (Amoeba).